The chain runs to 270 residues: 4-hydroxy-tetrahydrodipicolinate reductase (270 aa).

NAD(+) contacts are provided by residues 11–16 and glutamate 37; that span reads GCNGRM. Arginine 38 serves as a coordination point for NADP(+). Residues 101–103 and 125–128 contribute to the NAD(+) site; these read GTT and ASNY. Catalysis depends on histidine 158, which acts as the Proton donor/acceptor. Histidine 159 contributes to the (S)-2,3,4,5-tetrahydrodipicolinate binding site. The active-site Proton donor is the lysine 162. Position 168-169 (168-169) interacts with (S)-2,3,4,5-tetrahydrodipicolinate; it reads GT.

This sequence belongs to the DapB family.

It localises to the cytoplasm. It catalyses the reaction (S)-2,3,4,5-tetrahydrodipicolinate + NAD(+) + H2O = (2S,4S)-4-hydroxy-2,3,4,5-tetrahydrodipicolinate + NADH + H(+). The enzyme catalyses (S)-2,3,4,5-tetrahydrodipicolinate + NADP(+) + H2O = (2S,4S)-4-hydroxy-2,3,4,5-tetrahydrodipicolinate + NADPH + H(+). It participates in amino-acid biosynthesis; L-lysine biosynthesis via DAP pathway; (S)-tetrahydrodipicolinate from L-aspartate: step 4/4. In terms of biological role, catalyzes the conversion of 4-hydroxy-tetrahydrodipicolinate (HTPA) to tetrahydrodipicolinate. The chain is 4-hydroxy-tetrahydrodipicolinate reductase from Aeromonas salmonicida (strain A449).